The chain runs to 473 residues: BPI fold-containing family B member 3 (473 aa).

The N-terminal stretch at 1 to 20 is a signal peptide; the sequence is MMPGVYALLLLWGLATPCLG. A glycan (N-linked (GlcNAc...) asparagine) is linked at N139. The cysteines at positions 161 and 196 are disulfide-linked.

Belongs to the BPI/LBP/Plunc superfamily. BPI/LBP family. Highly expressed in olfactory mucosa but undetectable in thymus, kidney, lung, brain, spleen and liver.

It is found in the secreted. May have the capacity to recognize and bind specific classes of odorants. May act as a carrier molecule, transporting odorants across the mucus layer to access receptor sites. May serve as a primary defense mechanism by recognizing and removing potentially harmful odorants or pathogenic microorganisms from the mucosa or clearing excess odorant from mucus to enable new odorant stimuli to be received. The chain is BPI fold-containing family B member 3 from Rattus norvegicus (Rat).